The chain runs to 197 residues: uncharacterized protein (197 aa).

Belongs to the NAD(P)H dehydrogenase (quinone) family.

This is an uncharacterized protein from Bacillus subtilis (strain 168).